The primary structure comprises 358 residues: Protein-glutamate methylesterase/protein-glutamine glutaminase 1 (358 aa).

The 118-residue stretch at 8–125 (RVLIVDDSAV…ARGLEGYAEE (118 aa)) folds into the Response regulatory domain. The residue at position 59 (aspartate 59) is a 4-aspartylphosphate. The region spanning 165–352 (FRTTDRLIAI…LDRVAERLLA (188 aa)) is the CheB-type methylesterase domain. Catalysis depends on residues serine 177, histidine 203, and aspartate 299.

It belongs to the CheB family. Phosphorylated by CheA. Phosphorylation of the N-terminal regulatory domain activates the methylesterase activity.

The protein resides in the cytoplasm. The catalysed reaction is [protein]-L-glutamate 5-O-methyl ester + H2O = L-glutamyl-[protein] + methanol + H(+). The enzyme catalyses L-glutaminyl-[protein] + H2O = L-glutamyl-[protein] + NH4(+). Functionally, involved in chemotaxis. Part of a chemotaxis signal transduction system that modulates chemotaxis in response to various stimuli. Catalyzes the demethylation of specific methylglutamate residues introduced into the chemoreceptors (methyl-accepting chemotaxis proteins or MCP) by CheR. Also mediates the irreversible deamidation of specific glutamine residues to glutamic acid. The protein is Protein-glutamate methylesterase/protein-glutamine glutaminase 1 of Xanthomonas axonopodis pv. citri (strain 306).